A 307-amino-acid polypeptide reads, in one-letter code: Small ribosomal subunit biogenesis GTPase RsgA (307 aa).

Residues 80-237 (KADLRQTIVS…IVDTPGIKEF (158 aa)) enclose the CP-type G domain. GTP-binding positions include 129 to 132 (NKID) and 180 to 188 (GQSGVGKSS). Zn(2+) is bound by residues Cys-261, Cys-266, His-268, and Cys-274.

It belongs to the TRAFAC class YlqF/YawG GTPase family. RsgA subfamily. Monomer. Associates with 30S ribosomal subunit, binds 16S rRNA. Requires Zn(2+) as cofactor.

It localises to the cytoplasm. Functionally, one of several proteins that assist in the late maturation steps of the functional core of the 30S ribosomal subunit. Helps release RbfA from mature subunits. May play a role in the assembly of ribosomal proteins into the subunit. Circularly permuted GTPase that catalyzes slow GTP hydrolysis, GTPase activity is stimulated by the 30S ribosomal subunit. The protein is Small ribosomal subunit biogenesis GTPase RsgA of Borreliella burgdorferi (strain ATCC 35210 / DSM 4680 / CIP 102532 / B31) (Borrelia burgdorferi).